The chain runs to 605 residues: Exonuclease V, mitochondrial (605 aa).

The transit peptide at 1–17 (MSLNFLKRYLSRSTRNF) directs the protein to the mitochondrion. 4 residues coordinate [4Fe-4S] cluster: C140, C563, C566, and C572.

This sequence belongs to the EXO5 family. In terms of assembly, monomer. Mg(2+) is required as a cofactor. The cofactor is [4Fe-4S] cluster.

It localises to the mitochondrion. Single strand DNA specific 5' exonuclease involved in mitochondrial DNA replication and recombination. Releases dinucleotides as main products of catalysis. Has the capacity to slide across 5'double-stranded DNA or 5'RNA sequences and resumes cutting two nucleotides downstream of the double-stranded-to-single-stranded junction or RNA-to-DNA junction, respectively. This chain is Exonuclease V, mitochondrial (EXO5), found in Candida tropicalis (strain ATCC MYA-3404 / T1) (Yeast).